The following is a 192-amino-acid chain: Large ribosomal subunit protein uL10 (192 aa).

The protein belongs to the universal ribosomal protein uL10 family. As to quaternary structure, part of the ribosomal stalk of the 50S ribosomal subunit. The N-terminus interacts with L11 and the large rRNA to form the base of the stalk. The C-terminus forms an elongated spine to which L12 dimers bind in a sequential fashion forming a multimeric L10(L12)X complex.

Functionally, forms part of the ribosomal stalk, playing a central role in the interaction of the ribosome with GTP-bound translation factors. This chain is Large ribosomal subunit protein uL10, found in Gloeobacter violaceus (strain ATCC 29082 / PCC 7421).